Here is a 252-residue protein sequence, read N- to C-terminus: Sugar fermentation stimulation protein homolog (252 aa).

Belongs to the SfsA family.

This chain is Sugar fermentation stimulation protein homolog, found in Picosynechococcus sp. (strain ATCC 27264 / PCC 7002 / PR-6) (Agmenellum quadruplicatum).